Here is a 346-residue protein sequence, read N- to C-terminus: Haptoglobin (346 aa).

An N-terminal signal peptide occupies residues 1-18 (MRALGAVVTLLLWGQLFA). Residues 31-87 (DSCPKPPEIENGYVEHLVRYRCQHYRLRTEGDGVYTLNSEKQWVNTAAGERLPECEA) enclose the Sushi domain. Intrachain disulfides connect C52-C85, C89-C206, C249-C280, and C291-C321. Residues 102 to 344 (IIGGSLDAKG…FLDWIQETMA (243 aa)) form the Peptidase S1 domain. 2 N-linked (GlcNAc...) asparagine glycosylation sites follow: N147 and N181. Residues 258–263 (VPEKEG) are interaction with CD163.

Belongs to the peptidase S1 family. In terms of assembly, tetramer of two alpha and two beta chains; disulfide-linked. The hemoglobin/haptoglobin complex is composed of a haptoglobin dimer bound to two hemoglobin alpha-beta dimers. Interacts with CD163. Interacts with ERGIC3. As to expression, expressed by the liver and secreted in plasma.

The protein localises to the secreted. In terms of biological role, as a result of hemolysis, hemoglobin is found to accumulate in the kidney and is secreted in the urine. Haptoglobin captures, and combines with free plasma hemoglobin to allow hepatic recycling of heme iron and to prevent kidney damage. Haptoglobin also acts as an antioxidant, has antibacterial activity and plays a role in modulating many aspects of the acute phase response. Hemoglobin/haptoglobin complexes are rapidly cleared by the macrophage CD163 scavenger receptor expressed on the surface of liver Kupfer cells through an endocytic lysosomal degradation pathway. The protein is Haptoglobin (HP) of Mesocricetus auratus (Golden hamster).